The following is a 1098-amino-acid chain: PAN2-PAN3 deadenylation complex catalytic subunit PAN2 (1098 aa).

WD repeat units follow at residues 19 to 58 (ASKD…PFQL), 150 to 190 (TGFD…SVKS), 253 to 293 (PFPN…KLNV), and 300 to 338 (PASP…NFVN). The interval 340–466 (PAPLEEQDIP…SIFHLKSPTS (127 aa)) is linker. A disordered region spans residues 417–442 (RNISQPYQSLREPPGSNSNAPRFISE). A USP domain is found at 466-839 (SVPHCYSRLQ…KPVIIVYSEP (374 aa)). The 174-residue stretch at 894-1067 (IAIDAEFVVS…EDAYTALMLF (174 aa)) folds into the Exonuclease domain. Positions 897, 899, 1006, and 1059 each coordinate a divalent metal cation.

It belongs to the peptidase C19 family. PAN2 subfamily. As to quaternary structure, forms a heterotrimer with an asymmetric homodimer of the regulatory subunit PAN3 to form the poly(A)-nuclease (PAN) deadenylation complex. It depends on a divalent metal cation as a cofactor.

The protein resides in the cytoplasm. It carries out the reaction Exonucleolytic cleavage of poly(A) to 5'-AMP.. Its activity is regulated as follows. Positively regulated by the regulatory subunit PAN3. Its function is as follows. Catalytic subunit of the poly(A)-nuclease (PAN) deadenylation complex, one of two cytoplasmic mRNA deadenylases involved in mRNA turnover. PAN specifically shortens poly(A) tails of RNA and the activity is stimulated by poly(A)-binding protein PAB1. PAN deadenylation is followed by rapid degradation of the shortened mRNA tails by the CCR4-NOT complex. Deadenylated mRNAs are then degraded by two alternative mechanisms, namely exosome-mediated 3'-5' exonucleolytic degradation, or deadenylation-dependent mRNA decaping and subsequent 5'-3' exonucleolytic degradation by XRN1. May also be involved in post-transcriptional maturation of mRNA poly(A) tails. This is PAN2-PAN3 deadenylation complex catalytic subunit PAN2 from Meyerozyma guilliermondii (strain ATCC 6260 / CBS 566 / DSM 6381 / JCM 1539 / NBRC 10279 / NRRL Y-324) (Yeast).